The sequence spans 307 residues: UDP-3-O-acyl-N-acetylglucosamine deacetylase (307 aa).

Residues His80, His239, and Asp243 each contribute to the Zn(2+) site. Catalysis depends on His266, which acts as the Proton donor.

Belongs to the LpxC family. The cofactor is Zn(2+).

The catalysed reaction is a UDP-3-O-[(3R)-3-hydroxyacyl]-N-acetyl-alpha-D-glucosamine + H2O = a UDP-3-O-[(3R)-3-hydroxyacyl]-alpha-D-glucosamine + acetate. Its pathway is glycolipid biosynthesis; lipid IV(A) biosynthesis; lipid IV(A) from (3R)-3-hydroxytetradecanoyl-[acyl-carrier-protein] and UDP-N-acetyl-alpha-D-glucosamine: step 2/6. Catalyzes the hydrolysis of UDP-3-O-myristoyl-N-acetylglucosamine to form UDP-3-O-myristoylglucosamine and acetate, the committed step in lipid A biosynthesis. This is UDP-3-O-acyl-N-acetylglucosamine deacetylase from Neisseria meningitidis serogroup A / serotype 4A (strain DSM 15465 / Z2491).